Here is a 74-residue protein sequence, read N- to C-terminus: UPF0291 protein lmo0496 (74 aa).

It belongs to the UPF0291 family.

The protein resides in the cytoplasm. The chain is UPF0291 protein lmo0496 from Listeria monocytogenes serovar 1/2a (strain ATCC BAA-679 / EGD-e).